The sequence spans 369 residues: Lipoyl synthase, mitochondrial (369 aa).

Residues 1–32 (MLTKGVRALAWSPRRYITLDAEAAKPVVAKRR) constitute a mitochondrion transit peptide. 7 residues coordinate [4Fe-4S] cluster: cysteine 106, cysteine 111, cysteine 117, cysteine 136, cysteine 140, cysteine 143, and serine 351. Residues 121 to 340 (NKGSATATIM…KEKALELGFL (220 aa)) form the Radical SAM core domain.

The protein belongs to the radical SAM superfamily. Lipoyl synthase family. The cofactor is [4Fe-4S] cluster.

The protein localises to the mitochondrion. It catalyses the reaction [[Fe-S] cluster scaffold protein carrying a second [4Fe-4S](2+) cluster] + N(6)-octanoyl-L-lysyl-[protein] + 2 oxidized [2Fe-2S]-[ferredoxin] + 2 S-adenosyl-L-methionine + 4 H(+) = [[Fe-S] cluster scaffold protein] + N(6)-[(R)-dihydrolipoyl]-L-lysyl-[protein] + 4 Fe(3+) + 2 hydrogen sulfide + 2 5'-deoxyadenosine + 2 L-methionine + 2 reduced [2Fe-2S]-[ferredoxin]. It participates in protein modification; protein lipoylation via endogenous pathway; protein N(6)-(lipoyl)lysine from octanoyl-[acyl-carrier-protein]: step 2/2. In terms of biological role, catalyzes the radical-mediated insertion of two sulfur atoms into the C-6 and C-8 positions of the octanoyl moiety bound to the lipoyl domains of lipoate-dependent enzymes, thereby converting the octanoylated domains into lipoylated derivatives. This is Lipoyl synthase, mitochondrial from Eremothecium gossypii (strain ATCC 10895 / CBS 109.51 / FGSC 9923 / NRRL Y-1056) (Yeast).